The primary structure comprises 656 residues: Exoribonuclease 2 (656 aa).

The 329-residue stretch at 190–518 (RSDLTKTPFF…LNHRLIKSVL (329 aa)) folds into the RNB domain. The region spanning 564–649 (KWRYKAEIFD…ESGQLIGKLA (86 aa)) is the S1 motif domain.

The protein belongs to the RNR ribonuclease family. RNase II subfamily.

The protein resides in the cytoplasm. The enzyme catalyses Exonucleolytic cleavage in the 3'- to 5'-direction to yield nucleoside 5'-phosphates.. Involved in mRNA degradation. Hydrolyzes single-stranded polyribonucleotides processively in the 3' to 5' direction. The polypeptide is Exoribonuclease 2 (Psychromonas ingrahamii (strain DSM 17664 / CCUG 51855 / 37)).